The primary structure comprises 57 residues: DNA-directed RNA polymerase subunit Rpo6 (57 aa).

This sequence belongs to the archaeal Rpo6/eukaryotic RPB6 RNA polymerase subunit family. As to quaternary structure, part of the RNA polymerase complex.

It localises to the cytoplasm. It carries out the reaction RNA(n) + a ribonucleoside 5'-triphosphate = RNA(n+1) + diphosphate. Its function is as follows. DNA-dependent RNA polymerase (RNAP) catalyzes the transcription of DNA into RNA using the four ribonucleoside triphosphates as substrates. In Pyrococcus abyssi (strain GE5 / Orsay), this protein is DNA-directed RNA polymerase subunit Rpo6.